We begin with the raw amino-acid sequence, 376 residues long: Endoplasmic reticulum-Golgi intermediate compartment protein 2 (376 aa).

Residues 1-33 are Cytoplasmic-facing; the sequence is MRRLNKKKALNFVRELDAFPKVPESYVETTASG. The chain crosses the membrane as a helical span at residues 34 to 54; that stretch reads GTVSLLAFTAMALLAFFEFFV. Residues 55-318 lie on the Lumenal side of the membrane; sequence YRDTWMKYEY…PFWQFLVRLC (264 aa). Residues 319–339 form a helical membrane-spanning segment; sequence GIIGGIFSTTGMLHNLVGFCV. The Cytoplasmic portion of the chain corresponds to 340 to 376; that stretch reads DVVCCRFKLGVYKPKSMSDFDGQINSLTPLLSENAEQ.

This sequence belongs to the ERGIC family.

It localises to the endoplasmic reticulum-Golgi intermediate compartment membrane. It is found in the golgi apparatus. Its subcellular location is the cis-Golgi network membrane. The protein localises to the endoplasmic reticulum membrane. Possible role in transport between endoplasmic reticulum and Golgi. This chain is Endoplasmic reticulum-Golgi intermediate compartment protein 2 (ergic2), found in Danio rerio (Zebrafish).